The sequence spans 282 residues: uncharacterized protein (282 aa).

A run of 4 helical transmembrane segments spans residues 130-150 (WALL…GFGL), 170-190 (STSW…WPSA), 191-211 (AAGL…YVIV), and 223-243 (ILTH…WRSA). The tract at residues 263-282 (DNASRGRRRGHLWPTDGSAA) is disordered.

The protein localises to the cell membrane. This is an uncharacterized protein from Mycobacterium tuberculosis (strain CDC 1551 / Oshkosh).